Here is an 884-residue protein sequence, read N- to C-terminus: Protein P (884 aa).

Residues 1-184 (MHPFSRLFRN…GKPYSWEHRQ (184 aa)) form a terminal protein domain (TP) region. The interval 185-387 (LVQHNGQQHK…YCIHHIVSSL (203 aa)) is spacer. The interval 299–345 (RNSGHTTWFSSASNSNKSRSREKAYSSNSTSKRYSPPLNYEKSDFSS) is disordered. The segment at 388–729 (DDWGPCTVTG…YEELWPVVRQ (342 aa)) is polymerase/reverse transcriptase domain (RT). Positions 398-639 (DVTIKSPRTP…NHLHFMGYVI (242 aa)) constitute a Reverse transcriptase domain. Positions 470, 590, and 591 each coordinate Mg(2+).

The protein belongs to the hepadnaviridae P protein family.

The enzyme catalyses DNA(n) + a 2'-deoxyribonucleoside 5'-triphosphate = DNA(n+1) + diphosphate. It catalyses the reaction Endonucleolytic cleavage to 5'-phosphomonoester.. With respect to regulation, activated by host HSP70 and HSP40 in vitro to be able to bind the epsilon loop of the pgRNA. Because deletion of the RNase H region renders the protein partly chaperone-independent, the chaperones may be needed indirectly to relieve occlusion of the RNA-binding site by this domain. Inhibited by several reverse-transcriptase inhibitors: Lamivudine, Adefovir and Entecavir. Its function is as follows. Multifunctional enzyme that converts the viral RNA genome into dsDNA in viral cytoplasmic capsids. This enzyme displays a DNA polymerase activity that can copy either DNA or RNA templates, and a ribonuclease H (RNase H) activity that cleaves the RNA strand of RNA-DNA heteroduplexes in a partially processive 3'- to 5'-endonucleasic mode. Neo-synthesized pregenomic RNA (pgRNA) are encapsidated together with the P protein, and reverse-transcribed inside the nucleocapsid. Initiation of reverse-transcription occurs first by binding the epsilon loop on the pgRNA genome, and is initiated by protein priming, thereby the 5'-end of (-)DNA is covalently linked to P protein. Partial (+)DNA is synthesized from the (-)DNA template and generates the relaxed circular DNA (RC-DNA) genome. After budding and infection, the RC-DNA migrates in the nucleus, and is converted into a plasmid-like covalently closed circular DNA (cccDNA). The activity of P protein does not seem to be necessary for cccDNA generation, and is presumably released from (+)DNA by host nuclear DNA repair machinery. The polypeptide is Protein P (Woodchuck hepatitis B virus (isolate 7) (WHV)).